A 337-amino-acid chain; its full sequence is Undecaprenyl-phosphate 4-deoxy-4-formamido-L-arabinose transferase (337 aa).

The next 2 membrane-spanning stretches (helical) occupy residues leucine 235–valine 255 and phenylalanine 270–leucine 290.

It belongs to the glycosyltransferase 2 family.

It is found in the cell inner membrane. It carries out the reaction UDP-4-deoxy-4-formamido-beta-L-arabinose + di-trans,octa-cis-undecaprenyl phosphate = 4-deoxy-4-formamido-alpha-L-arabinopyranosyl di-trans,octa-cis-undecaprenyl phosphate + UDP. Its pathway is glycolipid biosynthesis; 4-amino-4-deoxy-alpha-L-arabinose undecaprenyl phosphate biosynthesis; 4-amino-4-deoxy-alpha-L-arabinose undecaprenyl phosphate from UDP-4-deoxy-4-formamido-beta-L-arabinose and undecaprenyl phosphate: step 1/2. It functions in the pathway bacterial outer membrane biogenesis; lipopolysaccharide biosynthesis. Catalyzes the transfer of 4-deoxy-4-formamido-L-arabinose from UDP to undecaprenyl phosphate. The modified arabinose is attached to lipid A and is required for resistance to polymyxin and cationic antimicrobial peptides. This is Undecaprenyl-phosphate 4-deoxy-4-formamido-L-arabinose transferase from Pseudomonas syringae pv. syringae (strain B728a).